The sequence spans 258 residues: Type III pantothenate kinase (258 aa).

6 to 13 (DVGNTQIF) serves as a coordination point for ATP. Position 107–110 (107–110 (GADR)) interacts with substrate. Catalysis depends on D109, which acts as the Proton acceptor. A K(+)-binding site is contributed by D130. T133 contacts ATP. A substrate-binding site is contributed by T185.

This sequence belongs to the type III pantothenate kinase family. As to quaternary structure, homodimer. NH4(+) serves as cofactor. It depends on K(+) as a cofactor.

The protein resides in the cytoplasm. The catalysed reaction is (R)-pantothenate + ATP = (R)-4'-phosphopantothenate + ADP + H(+). Its pathway is cofactor biosynthesis; coenzyme A biosynthesis; CoA from (R)-pantothenate: step 1/5. Functionally, catalyzes the phosphorylation of pantothenate (Pan), the first step in CoA biosynthesis. The chain is Type III pantothenate kinase from Elusimicrobium minutum (strain Pei191).